The chain runs to 374 residues: Chaperone protein DnaJ (374 aa).

The 65-residue stretch at 4 to 68 (DYYEILGVSR…EMKARFDRFG (65 aa)) folds into the J domain. The CR-type zinc finger occupies 132-214 (GGDKELTIKH…CGGRGQKEAT (83 aa)). Residues Cys145, Cys148, Cys162, Cys165, Cys188, Cys191, Cys202, and Cys205 each contribute to the Zn(2+) site. CXXCXGXG motif repeat units lie at residues 145–152 (CGTCNGSG), 162–169 (CSTCGGTG), 188–195 (CPSCNGSG), and 202–209 (CVDCGGRG).

It belongs to the DnaJ family. As to quaternary structure, homodimer. It depends on Zn(2+) as a cofactor.

It is found in the cytoplasm. In terms of biological role, participates actively in the response to hyperosmotic and heat shock by preventing the aggregation of stress-denatured proteins and by disaggregating proteins, also in an autonomous, DnaK-independent fashion. Unfolded proteins bind initially to DnaJ; upon interaction with the DnaJ-bound protein, DnaK hydrolyzes its bound ATP, resulting in the formation of a stable complex. GrpE releases ADP from DnaK; ATP binding to DnaK triggers the release of the substrate protein, thus completing the reaction cycle. Several rounds of ATP-dependent interactions between DnaJ, DnaK and GrpE are required for fully efficient folding. Also involved, together with DnaK and GrpE, in the DNA replication of plasmids through activation of initiation proteins. The protein is Chaperone protein DnaJ of Trichodesmium erythraeum (strain IMS101).